A 279-amino-acid polypeptide reads, in one-letter code: Oxygen-dependent coproporphyrinogen-III oxidase (279 aa).

Residue S102 participates in substrate binding. 2 residues coordinate a divalent metal cation: H106 and H116. H116 serves as the catalytic Proton donor. 118–120 is a substrate binding site; it reads NTR. A divalent metal cation is bound by residues H149 and H179. Residues 244-279 are important for dimerization; that stretch reads YVEFNLLYDRGTKFGLMTDGNVEAILMSLPPEVKFN.

It belongs to the aerobic coproporphyrinogen-III oxidase family. As to quaternary structure, homodimer. It depends on a divalent metal cation as a cofactor.

Its subcellular location is the cytoplasm. The enzyme catalyses coproporphyrinogen III + O2 + 2 H(+) = protoporphyrinogen IX + 2 CO2 + 2 H2O. It participates in porphyrin-containing compound metabolism; protoporphyrin-IX biosynthesis; protoporphyrinogen-IX from coproporphyrinogen-III (O2 route): step 1/1. Involved in the heme biosynthesis. Catalyzes the aerobic oxidative decarboxylation of propionate groups of rings A and B of coproporphyrinogen-III to yield the vinyl groups in protoporphyrinogen-IX. This Rickettsia akari (strain Hartford) protein is Oxygen-dependent coproporphyrinogen-III oxidase.